Reading from the N-terminus, the 63-residue chain is Mu-like prophage FluMu protein gp38 (63 aa).

The protein to phage Mu protein gp38.

This chain is Mu-like prophage FluMu protein gp38, found in Haemophilus influenzae (strain ATCC 51907 / DSM 11121 / KW20 / Rd).